The primary structure comprises 643 residues: MEAVVNSDVFLTSNAGLKSSYTNQTLSLVDEDHIHTSDKSLSCSVCNSLSQIVDDDFISAGARNQRTKPKRAGNNQSQQPIKKDCMVSIDEVASTHDWSTRLRNDGNAIAKYLTTNKYDTSQFTIQDMLNIMNKLNIVRTNRNELFQLLTHVKSTLNNASVSVKCTHPLVLIHSRASPRIGDQLKELDKIYSPSNHHILLSTTRFQSMHFTDMSSSQDLSFIYRKPETNYYIHPILMALFGIKLPALENAYVHGDTYSLIQQLYEFRKVKSYNYMLLVNRLTEDNPIVITGVSDLISTEIQRANMHTMIRKAIMNIIMGIFYCNDDDAVDPHLMKIIHTGCSQVMTDEEQILASILSIVGFRPTLVSVARPINGISYDMKLQAAPYIVVNPMKMITTSDSPISINSKDIYSMAFDGNSGRVVFAPPNIGYGRCSGVTHIDPLGTNVMGSAVHSPVIVNGAMMFYVERRQNKNMFGGECYTGFRSLIDDTPIDVSPEIMLNGIMYRLKSAVCYKLGDQFFDCGSSDIFLKGHYTILFTENGPWMYDLSVFNPGARNARLMRALKNQYKKLSMDSDDGFYEWLNGDGSVFAASKQQMLMNHVANFDDDLLTMEEAMSMISRHCCILIYAQDYDQYISARHITELF.

A propeptide spanning residues 1–61 is cleaved from the precursor; sequence MEAVVNSDVF…IVDDDFISAG (61 aa).

The protein belongs to the orthopoxvirus OPG129 family. The 73-kDa precursor is cleaved to a mature protein of 60 kDa during virion maturation. Proteolytic cleavage of major core proteins OPG129, OPG136, and OPG098, which occurs at a late stage of core formation, is required for production of infectious mature virions (MV).

It is found in the virion. Functionally, major component of the virion core that undergoes proteolytic processing during the immature virion (IV) to mature virion (MV) transition. Essential for the formation of a structurally normal core. In Vaccinia virus (strain Western Reserve) (VACV), this protein is Major core protein OPG129 (OPG129).